The sequence spans 87 residues: MEGRGIRKTLTGRVVSNKMDKTVVVAVETLVRHPLYQRTIRRTKKFKAHDEENACRIGDKVKMMETRPLSKEKRWRVVEILERTKQI.

The protein belongs to the universal ribosomal protein uS17 family. As to quaternary structure, part of the 30S ribosomal subunit.

One of the primary rRNA binding proteins, it binds specifically to the 5'-end of 16S ribosomal RNA. The polypeptide is Small ribosomal subunit protein uS17 (Pelotomaculum thermopropionicum (strain DSM 13744 / JCM 10971 / SI)).